Here is a 2871-residue protein sequence, read N- to C-terminus: Desmoplakin (2871 aa).

The segment at 1–584 is interaction with PKP1, JUP, PKP2; the sequence is MSCNGGSHPR…DYMKTIADLE (584 aa). Residues 1–1056 form a globular 1 region; sequence MSCNGGSHPR…ANSENCNKNK (1056 aa). Phosphoserine occurs at positions 22 and 53. Position 56 is a phosphotyrosine (Tyr-56). At Thr-61 the chain carries Phosphothreonine. Phosphoserine occurs at positions 165, 166, and 176. 2 Spectrin repeats span residues 178–271 and 272–375; these read SGWD…HLRQ and LQNI…LKEN. The stretch at 376–446 is one Spectrin 3a repeat; sequence AAYFQFFEEA…NLVNKSKKIV (71 aa). Residues 458-515 form the SH3 domain; sequence NKPIILRALCDYKQDQKIVHKGDECILKDNNERSKWYVTGPGGVDMLVPSVGLIIPPP. A Spectrin 3b repeat occupies 516–545; sequence NPLAVDLSCKIEQYYEAILALWNQLYINMK. Spectrin repeat units lie at residues 546-627, 654-769, and 770-883; these read SLVS…IQLP, VIET…SLCT, and VRAL…DLEK. Residues 1018 to 1945 are a coiled coil; that stretch reads SEMLKSLEDL…QREIDKLRQR (928 aa). The central fibrous rod domain stretch occupies residues 1057–1945; it reads FLDQNLQKYQ…QREIDKLRQR (889 aa). Phosphoserine occurs at positions 1658, 1708, and 2024. The segment at 1946–2871 is globular 2; that stretch reads PYGSHRETQT…YSFSSSSIGH (926 aa). A 4.5 X 38 AA tandem repeats (Domain A) region spans residues 1960–2208; it reads TVDTSKLVFD…LLLSVQKRSM (249 aa). Plectin repeat units lie at residues 2009–2045, 2046–2083, 2084–2121, 2122–2159, 2163–2197, 2198–2233, 2251–2288, 2289–2326, 2327–2364, 2365–2402, 2406–2440, 2456–2493, 2507–2544, 2610–2647, 2648–2685, 2724–2761, and 2762–2799; these read QPFLRGAGSIAGASASPKEKYSLVEAKRKKLISPEST, VMLLEAQAATGGIIDPHRNEKLTVDSAIARDLIDFDDR, QQIYAAEKAITGFDDPFSGKTVSVSEAIKKNLIDRETG, MRLLEAQIASGGVVDPVNSVFLPKDVALARGLIDRDLY, NDPRDSQKNFVDPVTKKKVSYVQLKERCRIEPHTG, LLLLSVQKRSMSFQGIRQPVTVTELVDSGILRPSTV, KDFLQGSSCIAGIYNETTKQKLGIYEAMKIGLVRPGTA, LELLEAQAATGFIVDPVSNLRLPVEEAYKRGLVGIEFK, EKLLSAERAVTGYNDPETGNIISLFQAMNKELIEKGHG, IRLLEAQIATGGIIDPKESHRLPVDIAYKRGYFNEELS, SDPSDDTKGFFDPNTEENLTYLQLKERCIKDEETG, SQKNTLRKRRVVIVDPETNKEMSVQEAYKKGLIDYETF, TITGSDGSTRVVLVDRKTGSQYDIQDAIDKGLVDRKFF, SDTLEESSPIAAIFDTENLEKISITEGIERGIVDSITG, QRLLEAQACTGGIIHPTTGQKLSLQDAVSQGVIDQDMA, QRFLEFQYLTGGLVDPEVHGRISTEEAIRKGFIDGRAA, and QRLQDTSSYAKILTCPKTKLKISYKDAINRSMVEDITG. A phosphoserine mark is found at Ser-2207, Ser-2209, and Ser-2225. The tract at residues 2244-2446 is 4.5 X 38 AA tandem repeats (Domain B); that stretch reads DEVGERIKDF…EETGLCLLPL (203 aa). The 4.5 X 38 AA tandem repeats (Domain C) stretch occupies residues 2609 to 2822; sequence FSDTLEESSP…LPSPYNMSSA (214 aa). 2 positions are modified to phosphoserine: Ser-2810 and Ser-2815. Over residues 2810-2823 the composition is skewed to polar residues; it reads SKGLPSPYNMSSAP. Residues 2810–2871 form a disordered region; sequence SKGLPSPYNM…YSFSSSSIGH (62 aa). Tyr-2817 is modified (phosphotyrosine). Ser-2820, Ser-2821, and Ser-2825 each carry phosphoserine. The tract at residues 2824 to 2847 is 6 X 4 AA tandem repeats of G-S-R-[SR]; that stretch reads GSRSGSRSGSRSGSRSGSRSGSRR. Low complexity predominate over residues 2824-2847; the sequence is GSRSGSRSGSRSGSRSGSRSGSRR. Arg-2826 and Arg-2847 each carry omega-N-methylarginine. Ser-2849 is subject to Phosphoserine. The residue at position 2853 (Thr-2853) is a Phosphothreonine. Low complexity predominate over residues 2856–2871; that stretch reads SSYSYSYSFSSSSIGH. A Phosphoserine modification is found at Ser-2868.

This sequence belongs to the plakin or cytolinker family. Homodimer. Interacts with COL17A1 (via cytoplasmic region). Interacts with DSC2. Interacts with PKP2. Interacts with PKP1. Interacts weakly with TMEM65. Phosphorylation at Ser-2849 increases association with intermediate filament cytokeratin, potentially facilitating interaction between desmosome junctions and intermediate filament architecture. In terms of tissue distribution, expressed in oral mucosa (at protein level). Expressed in arrector pili muscle (at protein level). Expressed in the heart in the heart (at protein level). As to expression, apparently an obligate constituent of all desmosomes. Resides predominantly in tissues and cells of stratified origin.

The protein localises to the cell junction. Its subcellular location is the desmosome. The protein resides in the cell membrane. It is found in the cytoplasm. In terms of biological role, major high molecular weight protein of desmosomes. Regulates profibrotic gene expression in cardiomyocytes via activation of the MAPK14/p38 MAPK signaling cascade and increase in TGFB1 protein abundance. This Homo sapiens (Human) protein is Desmoplakin (DSP).